A 272-amino-acid polypeptide reads, in one-letter code: Cyclase-like protein 2 (272 aa).

An N-terminal signal peptide occupies residues methionine 1–glutamine 17.

The protein belongs to the Cyclase 1 superfamily. As to expression, highly expressed in leaf sheaths and flag leaves. Expressed in roots, stems, leaf collars, glumes, young panicles and pistils.

It is found in the secreted. The protein resides in the extracellular space. Its subcellular location is the extracellular matrix. In terms of biological role, may be involved in response to stresses. The sequence is that of Cyclase-like protein 2 from Oryza sativa subsp. japonica (Rice).